The sequence spans 221 residues: Putative gene 53 protein (221 aa).

The polypeptide is Putative gene 53 protein (53) (Bacillus phage SP01 (Bacteriophage SP01)).